A 492-amino-acid chain; its full sequence is GMP reductase (492 aa).

NADP(+) is bound by residues 30–31 (SR) and R78. 2 consecutive CBS domains span residues 99–162 (LIED…LVET) and 164–223 (MTPV…LNAT). Residues 260 to 262 (DIA) and 313 to 314 (VG) each bind NADP(+). K(+) contacts are provided by G314, G316, and C319. Catalysis depends on C319, which acts as the Thioimidate intermediate. The Proton donor/acceptor role is filled by T321. R322 is a K(+) binding site. GMP contacts are provided by residues 352–354 (DGG), 375–376 (GN), and 401–403 (GMA). NADP(+) is bound by residues M402 and 454–457 (SGIS). The Microbody targeting signal motif lies at 490 to 492 (SKL).

Belongs to the IMPDH/GMPR family. GuaC type 1 subfamily. As to quaternary structure, homotetramer.

The protein localises to the glycosome. It carries out the reaction IMP + NH4(+) + NADP(+) = GMP + NADPH + 2 H(+). With respect to regulation, activated by GTP and inhibited by ATP and IMP. Mycophenolic acid (MPA) is a competitive inhibitor of the enzyme with respect to NADPH. Its function is as follows. Catalyzes the irreversible NADPH-dependent deamination of GMP to IMP. It functions in the conversion of nucleobase, nucleoside and nucleotide derivatives of G to A nucleotides, and in maintaining the intracellular balance of A and G nucleotides. In Leishmania major, this protein is GMP reductase.